We begin with the raw amino-acid sequence, 278 residues long: Tryptophan 2,3-dioxygenase (278 aa).

Substrate-binding positions include 47 to 51, Y109, and R113; that span reads FIVQH. H236 is a heme binding site. T250 provides a ligand contact to substrate.

It belongs to the tryptophan 2,3-dioxygenase family. Homotetramer. Heme serves as cofactor.

It carries out the reaction L-tryptophan + O2 = N-formyl-L-kynurenine. It participates in amino-acid degradation; L-tryptophan degradation via kynurenine pathway; L-kynurenine from L-tryptophan: step 1/2. Its function is as follows. Heme-dependent dioxygenase that catalyzes the oxidative cleavage of the L-tryptophan (L-Trp) pyrrole ring and converts L-tryptophan to N-formyl-L-kynurenine. Catalyzes the oxidative cleavage of the indole moiety. This chain is Tryptophan 2,3-dioxygenase, found in Ralstonia pickettii (strain 12J).